The chain runs to 117 residues: cAMP-regulated phosphoprotein 19-A (117 aa).

Over residues 1–37 (MSGENQETKAQEESSALEQKEIDDKVVSPEKSEEIKL) the composition is skewed to basic and acidic residues. A disordered region spans residues 1 to 54 (MSGENQETKAQEESSALEQKEIDDKVVSPEKSEEIKLKARYPNLGPKPGGSDFL). The residue at position 28 (Ser-28) is a Phosphoserine; by CDK2. Phosphoserine; by GWL is present on Ser-67. Positions 78-117 (KNKQLPTAASDKTEVTGDHIPTPQDLPQRKPSLVASKLAG) are disordered. Residue Thr-99 is modified to Phosphothreonine; by CDK2. Phosphoserine; by PKA is present on Ser-109.

Belongs to the endosulfine family. Interacts (when phosphorylated at Ser-67) with ppp2r2d. Phosphorylation at Ser-67 by gwl during mitosis is essential for interaction with ppp2r2d (PR55-delta) and subsequent inactivation of PP2A. Phosphorylated by PKA.

It localises to the cytoplasm. In terms of biological role, protein phosphatase inhibitor that specifically inhibits protein phosphatase 2A (PP2A) during mitosis. When phosphorylated at Ser-67 during mitosis, specifically interacts with ppp2r2d (PR55-delta) and inhibits its activity, leading to inactivation of PP2A, an essential condition to keep cyclin-B1-CDK1 activity high during M phase. This Xenopus laevis (African clawed frog) protein is cAMP-regulated phosphoprotein 19-A (arpp19-a).